We begin with the raw amino-acid sequence, 115 residues long: Cyclin-dependent protein kinase inhibitor SMR3 (115 aa).

The segment covering 17-36 has biased composition (basic and acidic residues); sequence KIRLPTRPELDIPDSDHEDP. Residues 17-82 are disordered; the sequence is KIRLPTRPEL…RSSGTKRKLT (66 aa). The span at 67–81 shows a compositional bias: basic residues; sequence RKPKPNRSSGTKRKL.

Interacts with CDKA-1 and D-type cyclins. As to expression, expressed at low levels in roots and stems.

It is found in the nucleus. Its function is as follows. Probable cyclin-dependent protein kinase (CDK) inhibitor that functions as a repressor of mitosis in the endoreduplication cell cycle. This chain is Cyclin-dependent protein kinase inhibitor SMR3, found in Arabidopsis thaliana (Mouse-ear cress).